Here is a 387-residue protein sequence, read N- to C-terminus: Gamma-butyrobetaine dioxygenase (387 aa).

Zn(2+) contacts are provided by cysteine 38, cysteine 40, cysteine 43, and histidine 82. Residues histidine 202, aspartate 204, and histidine 347 each contribute to the Fe cation site. A Phosphoserine modification is found at serine 351.

It belongs to the gamma-BBH/TMLD family. It depends on Fe(2+) as a cofactor. L-ascorbate serves as cofactor. In terms of tissue distribution, expressed in the liver and in some extend in the testis and the epididymis.

The protein resides in the cytoplasm. It carries out the reaction 4-(trimethylamino)butanoate + 2-oxoglutarate + O2 = carnitine + succinate + CO2. It functions in the pathway amine and polyamine biosynthesis; carnitine biosynthesis. In terms of biological role, catalyzes the formation of L-carnitine from gamma-butyrobetaine. This is Gamma-butyrobetaine dioxygenase (Bbox1) from Rattus norvegicus (Rat).